A 266-amino-acid polypeptide reads, in one-letter code: Vitamin B12-binding protein (266 aa).

The N-terminal stretch at 1–22 (MAKQMFRALGALLLTLPVWLYA) is a signal peptide. One can recognise a Fe/B12 periplasmic-binding domain in the interval 25–266 (RVITLSPANT…QLCNALSQVN (242 aa)). Residues tyrosine 50 and 242-246 (DWFER) contribute to the cyanocob(III)alamin site. Cysteine 183 and cysteine 259 form a disulfide bridge.

It belongs to the BtuF family. In terms of assembly, the complex is composed of two ATP-binding proteins (BtuD), two transmembrane proteins (BtuC) and a solute-binding protein (BtuF).

The protein resides in the periplasm. Its function is as follows. Part of the ABC transporter complex BtuCDF involved in vitamin B12 import. Binds vitamin B12 and delivers it to the periplasmic surface of BtuC. This chain is Vitamin B12-binding protein, found in Salmonella typhi.